The following is a 363-amino-acid chain: Biotin synthase (363 aa).

Residues 38 to 266 enclose the Radical SAM core domain; the sequence is NTVQVSTLLS…ETQVRLSAGR (229 aa). C53, C57, and C60 together coordinate [4Fe-4S] cluster. 4 residues coordinate [2Fe-2S] cluster: C97, C129, C189, and R261. The disordered stretch occupies residues 315–363; the sequence is KAFEKKSQPESVAAEKSKYQSQGEKPRWSRPEHKIDRNLEAQQNAKTKA. A compositionally biased stretch (basic and acidic residues) spans 316–353; it reads AFEKKSQPESVAAEKSKYQSQGEKPRWSRPEHKIDRNL. Residues 354–363 show a composition bias toward polar residues; the sequence is EAQQNAKTKA.

The protein belongs to the radical SAM superfamily. Biotin synthase family. Homodimer. [4Fe-4S] cluster serves as cofactor. Requires [2Fe-2S] cluster as cofactor.

It carries out the reaction (4R,5S)-dethiobiotin + (sulfur carrier)-SH + 2 reduced [2Fe-2S]-[ferredoxin] + 2 S-adenosyl-L-methionine = (sulfur carrier)-H + biotin + 2 5'-deoxyadenosine + 2 L-methionine + 2 oxidized [2Fe-2S]-[ferredoxin]. It participates in cofactor biosynthesis; biotin biosynthesis; biotin from 7,8-diaminononanoate: step 2/2. Its function is as follows. Catalyzes the conversion of dethiobiotin (DTB) to biotin by the insertion of a sulfur atom into dethiobiotin via a radical-based mechanism. In Christiangramia forsetii (strain DSM 17595 / CGMCC 1.15422 / KT0803) (Gramella forsetii), this protein is Biotin synthase.